The chain runs to 448 residues: Tryptamine benzoyltransferase 2 (448 aa).

A disordered region spans residues 1–20; sequence MEITSSAMLKPAPTPTPHPL. Catalysis depends on proton acceptor residues His155 and Asp386.

It belongs to the plant acyltransferase family.

Functionally, hydroxycinnamoyl transferase that catalyzes the transfer of an acyl from benzoyl-CoA to tryptamine, to produce benzoyl tryptamine. Serotonin and tyramine serve as acyl acceptors in vitro. Specific for benzoyl-CoA as acyl donor. Has no activity with p-coumaroyl-CoA, caffeoyl-CoA, or feruloyl-CoA as acyl donors. This is Tryptamine benzoyltransferase 2 from Oryza sativa subsp. japonica (Rice).